We begin with the raw amino-acid sequence, 316 residues long: Probable 5-dehydro-4-deoxyglucarate dehydratase (316 aa).

It belongs to the DapA family.

The enzyme catalyses 5-dehydro-4-deoxy-D-glucarate + H(+) = 2,5-dioxopentanoate + CO2 + H2O. Its pathway is carbohydrate acid metabolism; D-glucarate degradation; 2,5-dioxopentanoate from D-glucarate: step 2/2. This is Probable 5-dehydro-4-deoxyglucarate dehydratase from Corynebacterium glutamicum (strain ATCC 13032 / DSM 20300 / JCM 1318 / BCRC 11384 / CCUG 27702 / LMG 3730 / NBRC 12168 / NCIMB 10025 / NRRL B-2784 / 534).